The primary structure comprises 399 residues: Tryptophan synthase beta chain (399 aa).

Lys92 carries the N6-(pyridoxal phosphate)lysine modification.

Belongs to the TrpB family. Tetramer of two alpha and two beta chains. It depends on pyridoxal 5'-phosphate as a cofactor.

The enzyme catalyses (1S,2R)-1-C-(indol-3-yl)glycerol 3-phosphate + L-serine = D-glyceraldehyde 3-phosphate + L-tryptophan + H2O. The protein operates within amino-acid biosynthesis; L-tryptophan biosynthesis; L-tryptophan from chorismate: step 5/5. In terms of biological role, the beta subunit is responsible for the synthesis of L-tryptophan from indole and L-serine. The polypeptide is Tryptophan synthase beta chain (Bordetella bronchiseptica (strain ATCC BAA-588 / NCTC 13252 / RB50) (Alcaligenes bronchisepticus)).